The primary structure comprises 228 residues: Ribose-5-phosphate isomerase A (228 aa).

Residues 29–32 (TGST), 85–88 (DGAD), and 98–101 (KGGG) contribute to the substrate site. Glutamate 107 functions as the Proton acceptor in the catalytic mechanism. Residue lysine 125 coordinates substrate.

Belongs to the ribose 5-phosphate isomerase family. Homodimer.

It catalyses the reaction aldehydo-D-ribose 5-phosphate = D-ribulose 5-phosphate. The protein operates within carbohydrate degradation; pentose phosphate pathway; D-ribose 5-phosphate from D-ribulose 5-phosphate (non-oxidative stage): step 1/1. In terms of biological role, catalyzes the reversible conversion of ribose-5-phosphate to ribulose 5-phosphate. The polypeptide is Ribose-5-phosphate isomerase A (Staphylococcus aureus (strain COL)).